The chain runs to 502 residues: Lipoyl synthase, apicoplast (502 aa).

Positions 1–16 are cleaved as a signal peptide; sequence MNFLVLFFSYSIFVLP. [4Fe-4S] cluster is bound by residues C192, C197, C203, C218, C222, C225, and S433. The Radical SAM core domain occupies 204–422; that stretch reads WNIGTATIML…KDVGLKMGFK (219 aa).

It belongs to the radical SAM superfamily. Lipoyl synthase family. [4Fe-4S] cluster serves as cofactor.

It is found in the plastid. Its subcellular location is the apicoplast. The catalysed reaction is [[Fe-S] cluster scaffold protein carrying a second [4Fe-4S](2+) cluster] + N(6)-octanoyl-L-lysyl-[protein] + 2 oxidized [2Fe-2S]-[ferredoxin] + 2 S-adenosyl-L-methionine + 4 H(+) = [[Fe-S] cluster scaffold protein] + N(6)-[(R)-dihydrolipoyl]-L-lysyl-[protein] + 4 Fe(3+) + 2 hydrogen sulfide + 2 5'-deoxyadenosine + 2 L-methionine + 2 reduced [2Fe-2S]-[ferredoxin]. It functions in the pathway protein modification; protein lipoylation via endogenous pathway; protein N(6)-(lipoyl)lysine from octanoyl-[acyl-carrier-protein]: step 2/2. Catalyzes the radical-mediated insertion of two sulfur atoms into the C-6 and C-8 positions of the octanoyl moiety bound to the lipoyl domains of lipoate-dependent enzymes, thereby converting the octanoylated domains into lipoylated derivatives. This Plasmodium yoelii yoelii protein is Lipoyl synthase, apicoplast.